We begin with the raw amino-acid sequence, 283 residues long: Foldase protein PrsA 3 (283 aa).

Residues 1–21 (MKKKKIFIGTIISCVMLALSA) form the signal peptide. Cys22 carries the N-palmitoyl cysteine lipid modification. Residue Cys22 is the site of S-diacylglycerol cysteine attachment. In terms of domain architecture, PpiC spans 132–222 (KPEMKVSHIL…YGYHIIKVTD (91 aa)).

Belongs to the PrsA family.

It is found in the cell membrane. The catalysed reaction is [protein]-peptidylproline (omega=180) = [protein]-peptidylproline (omega=0). In terms of biological role, plays a major role in protein secretion by helping the post-translocational extracellular folding of several secreted proteins. The protein is Foldase protein PrsA 3 (prsA3) of Bacillus cereus (strain ATCC 14579 / DSM 31 / CCUG 7414 / JCM 2152 / NBRC 15305 / NCIMB 9373 / NCTC 2599 / NRRL B-3711).